The chain runs to 353 residues: Serine proteinase inhibitor 1 (353 aa).

This sequence belongs to the serpin family. Poxviruses subfamily.

It is found in the host cytoplasm. Its function is as follows. Plays a role in mediating viral host range. May act to inhibit a caspase independent form of apoptosis to allow efficient virus replication in infected cells. This is Serine proteinase inhibitor 1 (OPG208) from Vaccinia virus (strain Western Reserve) (VACV).